A 304-amino-acid chain; its full sequence is MWLKLILAIVILIECIVVIYLPSHIESRIMNKKKHKIFNMENFENVASGAILALAFIHMLPEVIGLLNKNNLTIYCCFGLILISVTFLNITDILYDHHTENCSDIDNAEKNTNKFTINSASDKNIRDHIDIEMESLSIKENTNLSNNFIFDTFKSNAFFIVLSLFIHSFVEGLLIGSLKDKNPIIIVGLSMIAHKWAECLMIYKNAVKKTKDPILSSIYAWSFILSLPLGILVAVLSFSSNEFVEIIFSSIACGFFLYLSFNMTKDITVTKANKFYISFSYFFGVCGMSTLMIVFNYLEKSNVV.

The next 8 helical transmembrane spans lie at 1 to 21, 46 to 66, 74 to 94, 158 to 178, 183 to 203, 218 to 238, 243 to 263, and 275 to 295; these read MWLK…VIYL, VASG…VIGL, IYCC…TDIL, FFIV…IGSL, PIII…LMIY, IYAW…VLSF, FVEI…SFNM, and FYIS…MIVF.

Its subcellular location is the cell membrane. Putative transporter for the divalent zinc and iron cations. Required for the development of liver-stage parasites. The chain is Putative metal ion transporter ZIPCO from Plasmodium berghei (strain Anka).